A 202-amino-acid polypeptide reads, in one-letter code: Amelogenin (202 aa).

A Phosphoserine modification is found at Ser16. Positions 77–202 are disordered; sequence QPAPPQQPVM…TDKTKREEVD (126 aa). Positions 78 to 87 are enriched in pro residues; that stretch reads PAPPQQPVMP. The segment covering 101-112 has biased composition (low complexity); sequence QPNLPQPGQQPY. Over residues 113–125 the composition is skewed to pro residues; that stretch reads QPQPAQQPQPHQP. Low complexity predominate over residues 126-158; the sequence is IQPIQPIQPIQPMQPMQPMQPMQPMQPMQPQTP. Over residues 164-176 the composition is skewed to pro residues; sequence PLPPQPPLPPMFP.

Belongs to the amelogenin family.

It localises to the secreted. The protein localises to the extracellular space. The protein resides in the extracellular matrix. Functionally, plays a role in the biomineralization of teeth. Seems to regulate the formation of crystallites during the secretory stage of tooth enamel development. Thought to play a major role in the structural organization and mineralization of developing enamel. The polypeptide is Amelogenin (AMEL) (Monodelphis domestica (Gray short-tailed opossum)).